Here is a 435-residue protein sequence, read N- to C-terminus: Gamma-glutamyl phosphate reductase (435 aa).

The protein belongs to the gamma-glutamyl phosphate reductase family.

It is found in the cytoplasm. It catalyses the reaction L-glutamate 5-semialdehyde + phosphate + NADP(+) = L-glutamyl 5-phosphate + NADPH + H(+). Its pathway is amino-acid biosynthesis; L-proline biosynthesis; L-glutamate 5-semialdehyde from L-glutamate: step 2/2. Its function is as follows. Catalyzes the NADPH-dependent reduction of L-glutamate 5-phosphate into L-glutamate 5-semialdehyde and phosphate. The product spontaneously undergoes cyclization to form 1-pyrroline-5-carboxylate. This Parasynechococcus marenigrum (strain WH8102) protein is Gamma-glutamyl phosphate reductase.